Reading from the N-terminus, the 519-residue chain is Tachykinin-like peptides receptor 99D (519 aa).

The Extracellular segment spans residues 1-100 (MENRSDFEAD…SFAFVVPWWR (100 aa)). N3, N19, N22, and N61 each carry an N-linked (GlcNAc...) asparagine glycan. A helical membrane pass occupies residues 101 to 123 (QVLWSILFGGMVIVATGGNLIVV). Residues 124–134 (WIVMTTKRMRT) are Cytoplasmic-facing. Residues 135-155 (VTNYFIVNLSIADAMVSSLNV) form a helical membrane-spanning segment. Topologically, residues 156–175 (TFNYYYMLDSDWPFGEFYCK) are extracellular. C174 and C254 are joined by a disulfide. The helical transmembrane segment at 176–197 (LSQFIAMLSICASVFTLMAISI) threads the bilayer. Residues 198-217 (DRYVAIIRPLQPRMSKRCNL) are Cytoplasmic-facing. The helical transmembrane segment at 218 to 238 (AIAAVIWLASTLISCPMMIIY) threads the bilayer. At 239-270 (RTEEVPVRGLSNRTVCYPEWPDGPTNHSTMES) the chain is on the extracellular side. A helical transmembrane segment spans residues 271–292 (LYNILIIILTYFLPIVSMTVTY). The Cytoplasmic segment spans residues 293–324 (SRVGIELWGSKTIGECTPRQVENVRSKRRVVK). A helical transmembrane segment spans residues 325–346 (MMIVVVLIFAICWLPFHSYFII). Over 347–361 (TSCYPAITEAPFIQE) the chain is Extracellular. A helical transmembrane segment spans residues 362 to 384 (LYLAIYWLAMSNSMYNPIIYCWM). The Cytoplasmic segment spans residues 385–519 (NSRFRYGFKM…STANTTQLLS (135 aa)). C399 is lipidated: S-palmitoyl cysteine. The disordered stretch occupies residues 444 to 519 (PSSPKSHRIS…STANTTQLLS (76 aa)). Composition is skewed to polar residues over residues 454–465 (HSGTGRSATLRN) and 487–499 (SYQQ…WSGP). The span at 500–519 (NSATAVTNSSSTANTTQLLS) shows a compositional bias: low complexity.

Belongs to the G-protein coupled receptor 1 family. During late embryogenesis (stages 11-15), expressed in the brain and in a specific subset of neurons in each neuromere of the developing ventral ganglion. Expressed in the cortex of the adult brain, which contains the neuronal cell bodies.

The protein resides in the cell membrane. Receptor for tachykinin-like peptides. This Drosophila melanogaster (Fruit fly) protein is Tachykinin-like peptides receptor 99D (TkR99D).